The sequence spans 325 residues: Beta-1,3-galactosyltransferase brn (325 aa).

Residues 1–7 lie on the Cytoplasmic side of the membrane; sequence MQSKHRK. The helical; Signal-anchor for type II membrane protein transmembrane segment at 8 to 28 threads the bilayer; sequence LLLRCLLVLPLILLVDYCGLL. The Lumenal segment spans residues 29-325; that stretch reads THLHELNFER…WNECRSANYA (297 aa). N-linked (GlcNAc...) asparagine glycans are attached at residues Asn-149 and Asn-166.

It belongs to the glycosyltransferase 31 family.

The protein localises to the golgi apparatus membrane. It catalyses the reaction a ganglioside GM2 (d18:1(4E)) + UDP-alpha-D-galactose = a ganglioside GM1 (d18:1(4E)) + UDP + H(+). In terms of biological role, neurogenic protein essential for the development and maintenance of epithelial structure. Required in the germline for establishing the follicular epithelium and for determining the dorsal-ventral polarity. Collaborates with Notch on the apical surface of follicle cells to mediate germline-follicle cell adhesion. Brn has a role in chorion formation. This Drosophila melanogaster (Fruit fly) protein is Beta-1,3-galactosyltransferase brn (brn).